The following is a 585-amino-acid chain: Aspartate--tRNA ligase (585 aa).

L-aspartate is bound at residue E173. Positions 197–200 are aspartate; the sequence is QTLK. R219 contacts L-aspartate. ATP is bound by residues 219 to 221 and Q228; that span reads RDE. L-aspartate is bound at residue H446. Residue E480 coordinates ATP. Residue R487 coordinates L-aspartate. 532–535 provides a ligand contact to ATP; sequence GLDR.

It belongs to the class-II aminoacyl-tRNA synthetase family. Type 1 subfamily. As to quaternary structure, homodimer.

The protein localises to the cytoplasm. It carries out the reaction tRNA(Asp) + L-aspartate + ATP = L-aspartyl-tRNA(Asp) + AMP + diphosphate. In terms of biological role, catalyzes the attachment of L-aspartate to tRNA(Asp) in a two-step reaction: L-aspartate is first activated by ATP to form Asp-AMP and then transferred to the acceptor end of tRNA(Asp). The chain is Aspartate--tRNA ligase from Bacteroides fragilis (strain YCH46).